The primary structure comprises 367 residues: Peptide chain release factor 1 (367 aa).

Gln-243 carries the post-translational modification N5-methylglutamine.

It belongs to the prokaryotic/mitochondrial release factor family. Post-translationally, methylated by PrmC. Methylation increases the termination efficiency of RF1.

Its subcellular location is the cytoplasm. Functionally, peptide chain release factor 1 directs the termination of translation in response to the peptide chain termination codons UAG and UAA. The sequence is that of Peptide chain release factor 1 from Acidovorax sp. (strain JS42).